The chain runs to 197 residues: 7-methyl-GTP pyrophosphatase (197 aa).

The active-site Proton acceptor is the aspartate 73.

This sequence belongs to the Maf family. YceF subfamily. Requires a divalent metal cation as cofactor.

It localises to the cytoplasm. The catalysed reaction is N(7)-methyl-GTP + H2O = N(7)-methyl-GMP + diphosphate + H(+). In terms of biological role, nucleoside triphosphate pyrophosphatase that hydrolyzes 7-methyl-GTP (m(7)GTP). May have a dual role in cell division arrest and in preventing the incorporation of modified nucleotides into cellular nucleic acids. The protein is 7-methyl-GTP pyrophosphatase of Alcanivorax borkumensis (strain ATCC 700651 / DSM 11573 / NCIMB 13689 / SK2).